The following is a 147-amino-acid chain: MRIQKQQYTISSNSRINLLGILVLNVVCGKSSIFFSHPQRLGKLGGSSLGSTGPFQTLSINFCIGCFLFNSNHFDLLFSLPSSSSILSMSVLEKFCSCIDSVTRCCPSQSLETPGSVASHVVLALSSKCTPIQFNAKWSISHKSNTG.

Residues 13-35 traverse the membrane as a helical segment; it reads NSRINLLGILVLNVVCGKSSIFF.

It localises to the membrane. This is an uncharacterized protein from Saccharomyces cerevisiae (strain ATCC 204508 / S288c) (Baker's yeast).